The primary structure comprises 127 residues: Fluoride-specific ion channel FluC (127 aa).

The next 4 membrane-spanning stretches (helical) occupy residues 4–24, 36–56, 68–88, and 99–119; these read SILA…FLGL, GTLL…AYFA, LIIT…AEVV, and AAGA…LGLF. Residues Gly-75 and Thr-78 each contribute to the Na(+) site.

This sequence belongs to the fluoride channel Fluc/FEX (TC 1.A.43) family.

It localises to the cell inner membrane. It catalyses the reaction fluoride(in) = fluoride(out). Na(+) is not transported, but it plays an essential structural role and its presence is essential for fluoride channel function. Fluoride-specific ion channel. Important for reducing fluoride concentration in the cell, thus reducing its toxicity. This is Fluoride-specific ion channel FluC from Pseudomonas paraeruginosa (strain DSM 24068 / PA7) (Pseudomonas aeruginosa (strain PA7)).